The chain runs to 110 residues: MHEMSFAEAIIRNVLRFAEEKQAKTVTSVRVRVGELLLINPEQLQFCFSVASKGTIAEGAKLEISVERADIRCLLCGRELSKDEMLCECGGFAQVKGGKDFILESVVVEV.

Position 2 (His2) interacts with Ni(2+). Zn(2+) is bound by residues Cys73, Cys76, Cys87, and Cys89.

This sequence belongs to the HypA/HybF family.

Its function is as follows. Involved in the maturation of [NiFe] hydrogenases. Required for nickel insertion into the metal center of the hydrogenase. The polypeptide is Hydrogenase maturation factor HypA (Archaeoglobus fulgidus (strain ATCC 49558 / DSM 4304 / JCM 9628 / NBRC 100126 / VC-16)).